A 309-amino-acid chain; its full sequence is NADH-cytochrome b5 reductase 1 (309 aa).

The helical transmembrane segment at 29-49 threads the bilayer; the sequence is EFVPYAVALTAVLAGFKLFTG. The region spanning 60–165 is the FAD-binding FR-type domain; the sequence is TEFQEFVLKE…RGPKGAMVYT (106 aa). FAD contacts are provided by residues 145–160 and 171–208; these read TTLKVGDVMKVRGPKG and HIGMIAGGTGITPMLQVIKAIIRNRPRNGGTDITKVDL.

Belongs to the flavoprotein pyridine nucleotide cytochrome reductase family. In terms of assembly, monomer. Component of the 2-(3-amino-3-carboxypropyl)histidine synthase complex composed of dph1, dph2, dph3 and a NADH-dependent reductase, predominantly cbr1. FAD serves as cofactor.

Its subcellular location is the mitochondrion outer membrane. It carries out the reaction 2 Fe(III)-[cytochrome b5] + NADH = 2 Fe(II)-[cytochrome b5] + NAD(+) + H(+). It catalyses the reaction 2 Fe(3+)-[Dph3] + NADH = 2 Fe(2+)-[Dph3] + NAD(+) + H(+). It participates in protein modification; peptidyl-diphthamide biosynthesis. Functionally, NADH-dependent reductase for dph3 and cytochrome b5. Required for the first step of diphthamide biosynthesis, a post-translational modification of histidine which occurs in elongation factor 2. Dph1 and dph2 transfer a 3-amino-3-carboxypropyl (ACP) group from S-adenosyl-L-methionine (SAM) to a histidine residue, the reaction is assisted by a reduction system comprising dph3 and a NADH-dependent reductase, predominantly cbr1. By reducing dph3, also involved in the formation of the tRNA wobble base modification mcm5s 2U (5-methoxycarbonylmethyl-2-thiouridine), mediated by the elongator complex. The cytochrome b5/NADH cytochrome b5 reductase electron transfer system supports the catalytic activity of several sterol biosynthetic enzymes. The sequence is that of NADH-cytochrome b5 reductase 1 (cbr1) from Aspergillus clavatus (strain ATCC 1007 / CBS 513.65 / DSM 816 / NCTC 3887 / NRRL 1 / QM 1276 / 107).